The chain runs to 688 residues: DNA-directed RNA polymerase subunit beta' (688 aa).

Zn(2+) is bound by residues Cys-69, Cys-71, Cys-87, and Cys-90. Residues Asp-493, Asp-495, and Asp-497 each contribute to the Mg(2+) site.

It belongs to the RNA polymerase beta' chain family. RpoC1 subfamily. In plastids the minimal PEP RNA polymerase catalytic core is composed of four subunits: alpha, beta, beta', and beta''. When a (nuclear-encoded) sigma factor is associated with the core the holoenzyme is formed, which can initiate transcription. Requires Mg(2+) as cofactor. Zn(2+) serves as cofactor.

Its subcellular location is the plastid. The protein resides in the chloroplast. It carries out the reaction RNA(n) + a ribonucleoside 5'-triphosphate = RNA(n+1) + diphosphate. Its function is as follows. DNA-dependent RNA polymerase catalyzes the transcription of DNA into RNA using the four ribonucleoside triphosphates as substrates. The protein is DNA-directed RNA polymerase subunit beta' of Chloranthus spicatus (Chulantree).